The primary structure comprises 142 residues: MADNAKSLTVSIVTPDGQVYENKTPMLIVRTIDGELGILPNHIPVIASLAIDEVRIKQLESDQEDDEIAVNGGFVEFSNNTATIVADSAERQNDIDVARAENARKRAETRIQNAQQKHDDAELARAQVALRRAMNRLNVARH.

This sequence belongs to the ATPase epsilon chain family. In terms of assembly, F-type ATPases have 2 components, CF(1) - the catalytic core - and CF(0) - the membrane proton channel. CF(1) has five subunits: alpha(3), beta(3), gamma(1), delta(1), epsilon(1). CF(0) has three main subunits: a, b and c.

Its subcellular location is the cell membrane. Produces ATP from ADP in the presence of a proton gradient across the membrane. The polypeptide is ATP synthase epsilon chain (Lactiplantibacillus plantarum (strain ATCC BAA-793 / NCIMB 8826 / WCFS1) (Lactobacillus plantarum)).